The chain runs to 358 residues: MRERLLAAEKIKAIEWRDGTLHLLDQRLLPQEERWLSYDSASGVAGAIRDMVVRGAPAIGISAAYGVLLGARRRLAAGGDWRAALEEDFRVLAESRPTAVNLFWALDRMRERLARLKDGEDALVALEAEAVGIHESDREANLTMAQLGLELIRKHSGSPQALLTHCNTGALATGGFGTALGVIRAAWLEGLVDRVYADETRPWLQGARLTAWELAEEGIPVSLNADGAAAHLMKTKGITWVIVGADRITAEGDVANKIGTYQLAVVAMHHGVRFMVVAPSSTIDMSLHSGEDIPIEERDGRELLEIGGKRVAASVEAVNPVFDVTPADLIDAIVTERGVVERPNAAKMAELMSRKRLH.

Substrate is bound by residues 54–56, Arg-96, and Gln-205; that span reads RGA. Asp-246 serves as the catalytic Proton donor. 256 to 257 is a binding site for substrate; sequence NK.

This sequence belongs to the eIF-2B alpha/beta/delta subunits family. MtnA subfamily.

It carries out the reaction 5-(methylsulfanyl)-alpha-D-ribose 1-phosphate = 5-(methylsulfanyl)-D-ribulose 1-phosphate. The protein operates within amino-acid biosynthesis; L-methionine biosynthesis via salvage pathway; L-methionine from S-methyl-5-thio-alpha-D-ribose 1-phosphate: step 1/6. Catalyzes the interconversion of methylthioribose-1-phosphate (MTR-1-P) into methylthioribulose-1-phosphate (MTRu-1-P). This Azotobacter vinelandii (strain DJ / ATCC BAA-1303) protein is Methylthioribose-1-phosphate isomerase.